A 341-amino-acid chain; its full sequence is Ribosomal RNA small subunit methyltransferase C (341 aa).

The protein belongs to the methyltransferase superfamily. RsmC family. Monomer.

Its subcellular location is the cytoplasm. It carries out the reaction guanosine(1207) in 16S rRNA + S-adenosyl-L-methionine = N(2)-methylguanosine(1207) in 16S rRNA + S-adenosyl-L-homocysteine + H(+). Specifically methylates the guanine in position 1207 of 16S rRNA in the 30S particle. This chain is Ribosomal RNA small subunit methyltransferase C, found in Shewanella pealeana (strain ATCC 700345 / ANG-SQ1).